The chain runs to 203 residues: VPS4-associated protein 1 (203 aa).

Residues 99–109 are compositionally biased toward basic and acidic residues; sequence EKETNNSKDPD. 2 disordered regions span residues 99–125 and 171–193; these read EKET…AKND and QVNR…EELL. Residues 110–120 are compositionally biased toward low complexity; the sequence is PTTTDSTDTSP. Positions 121 to 157 form a coiled coil; sequence QAKNDAEILSETKKQYSKILDKVTELQRKNRKYELAK. Positions 171-182 are enriched in basic and acidic residues; that stretch reads QVNRERYLKEQE.

As to quaternary structure, interacts with VPS4.

It is found in the cytoplasm. The protein resides in the endosome. Its function is as follows. VPS4-associated protein involved in trafficking to the vacuole. This is VPS4-associated protein 1 (VFA1) from Saccharomyces cerevisiae (strain ATCC 204508 / S288c) (Baker's yeast).